The sequence spans 153 residues: 3-hydroxyacyl-[acyl-carrier-protein] dehydratase FabZ (153 aa).

Residue His47 is part of the active site.

The protein belongs to the thioester dehydratase family. FabZ subfamily.

The protein localises to the cytoplasm. The enzyme catalyses a (3R)-hydroxyacyl-[ACP] = a (2E)-enoyl-[ACP] + H2O. In terms of biological role, involved in unsaturated fatty acids biosynthesis. Catalyzes the dehydration of short chain beta-hydroxyacyl-ACPs and long chain saturated and unsaturated beta-hydroxyacyl-ACPs. The polypeptide is 3-hydroxyacyl-[acyl-carrier-protein] dehydratase FabZ (Myxococcus xanthus (strain DK1622)).